The chain runs to 433 residues: Enolase 2 (433 aa).

Residues 34–56 (RGMVPSGASTGEHEAVELRDGDK) are disordered. Residues 44-56 (GEHEAVELRDGDK) show a composition bias toward basic and acidic residues. Residue Gln163 coordinates (2R)-2-phosphoglycerate. Glu205 serves as the catalytic Proton donor. 3 residues coordinate Mg(2+): Asp243, Glu290, and Asp317. 4 residues coordinate (2R)-2-phosphoglycerate: Lys342, Arg371, Ser372, and Lys393. Lys342 serves as the catalytic Proton acceptor.

This sequence belongs to the enolase family. It depends on Mg(2+) as a cofactor.

The protein resides in the cytoplasm. It localises to the secreted. The protein localises to the cell surface. It catalyses the reaction (2R)-2-phosphoglycerate = phosphoenolpyruvate + H2O. The protein operates within carbohydrate degradation; glycolysis; pyruvate from D-glyceraldehyde 3-phosphate: step 4/5. Its function is as follows. Catalyzes the reversible conversion of 2-phosphoglycerate (2-PG) into phosphoenolpyruvate (PEP). It is essential for the degradation of carbohydrates via glycolysis. This is Enolase 2 from Lactococcus lactis subsp. cremoris (strain SK11).